The chain runs to 516 residues: Katanin p60 ATPase-containing subunit A1 (516 aa).

The tract at residues 75–212 is disordered; sequence GFKSEPAAPE…DEKKFDPAGY (138 aa). Composition is skewed to basic and acidic residues over residues 133–143 and 155–167; these read ARKDPPRRSEP and RGGR…RGDA. Residues 168-178 show a composition bias toward gly residues; it reads RSGGGGRGGAR. Residues 179–212 show a composition bias toward basic and acidic residues; sequence GSDKDKNRGGKSDKDKKAPSGEEGDEKKFDPAGY. Position 274-281 (274-281) interacts with ATP; that stretch reads GPPGTGKT.

This sequence belongs to the AAA ATPase family. Katanin p60 subunit A1 subfamily. As to quaternary structure, can homooligomerize into hexameric rings, which may be promoted by interaction with microtubules. Interacts with KATNB1, which may serve as a targeting subunit.

The protein localises to the cytoplasm. It is found in the cytoskeleton. The protein resides in the microtubule organizing center. Its subcellular location is the centrosome. It localises to the spindle pole. It carries out the reaction n ATP + n H2O + a microtubule = n ADP + n phosphate + (n+1) alpha/beta tubulin heterodimers.. ATPase activity is stimulated by microtubules, which promote homooligomerization. ATP-dependent microtubule severing is stimulated by interaction with KATNB1. Functionally, catalytic subunit of a complex which severs microtubules in an ATP-dependent manner. Microtubule severing may promote rapid reorganization of cellular microtubule arrays and the release of microtubules from the centrosome following nucleation. In mitotic spindles this could allow depolymerization of the microtubule end proximal to the centrosome, and subsequent poleward microtubule flux. The protein is Katanin p60 ATPase-containing subunit A1 of Strongylocentrotus purpuratus (Purple sea urchin).